Here is a 324-residue protein sequence, read N- to C-terminus: MNEKVILFTAGLAFIITVVLSPIFIPFLRRLKFGQSIREEGPKSHQKKSGTPTMGGLMILLSLSITTWLMSDIFFERTAHTYMLLFVTVGYGLLGFIDDFIKVVMKRNLGLTSKQKLAGQLLIALIFYFFFQHYSMSTVVSIPGTDVSLDLGVAYVLLIIFMLVGGSNAVNLTDGLDGLLAGTAAIAFGAYAVLAWNQGQYDVAIFSVAVVGAVLGFLVFNAHPAKVFMGDTGSLALGGAIVTIAILTKLEILLVIIGGVFVIETLSVIIQVISFKTTGKRVFRMSPLHHHYELIGWSEWRVVVTFWAVGLLFAILGIYIEVWV.

Transmembrane regions (helical) follow at residues 5–25 (VILF…PIFI), 55–75 (GGLM…DIFF), 81–101 (TYML…DDFI), 122–142 (LIAL…VVSI), 147–167 (VSLD…VGGS), 176–196 (LDGL…VLAW), 203–223 (VAIF…FNAH), 227–247 (VFMG…IAIL), 250–270 (LEIL…SVII), and 302–322 (VVVT…YIEV).

The protein belongs to the glycosyltransferase 4 family. MraY subfamily. Mg(2+) is required as a cofactor.

Its subcellular location is the cell membrane. It catalyses the reaction UDP-N-acetyl-alpha-D-muramoyl-L-alanyl-gamma-D-glutamyl-meso-2,6-diaminopimeloyl-D-alanyl-D-alanine + di-trans,octa-cis-undecaprenyl phosphate = di-trans,octa-cis-undecaprenyl diphospho-N-acetyl-alpha-D-muramoyl-L-alanyl-D-glutamyl-meso-2,6-diaminopimeloyl-D-alanyl-D-alanine + UMP. It participates in cell wall biogenesis; peptidoglycan biosynthesis. Its function is as follows. Catalyzes the initial step of the lipid cycle reactions in the biosynthesis of the cell wall peptidoglycan: transfers peptidoglycan precursor phospho-MurNAc-pentapeptide from UDP-MurNAc-pentapeptide onto the lipid carrier undecaprenyl phosphate, yielding undecaprenyl-pyrophosphoryl-MurNAc-pentapeptide, known as lipid I. In Anoxybacillus flavithermus (strain DSM 21510 / WK1), this protein is Phospho-N-acetylmuramoyl-pentapeptide-transferase.